The sequence spans 471 residues: Eremophilane O-acetyltransferase ORF8 (471 aa).

Belongs to the fumigaclavine B O-acetyltransferase family. In terms of assembly, monomer.

It participates in sesquiterpene biosynthesis. O-acetyltransferase; part of the gene cluster that mediates the biosynthesis of PR-toxin, a bicyclic sesquiterpene belonging to the eremophilane class and acting as a mycotoxin. The first step of the pathway is catalyzed by the aristolochene synthase which performs the cyclization of trans,trans-farnesyl diphosphate (FPP) to the bicyclic sesquiterpene aristolochene. Following the formation of aristolochene, the non-oxygenated aristolochene is converted to the trioxygenated intermediate eremofortin B, via 7-epi-neopetasone. This conversion appears to involve three enzymes, a hydroxysterol oxidase-like enzyme, the quinone-oxidase prx3 that forms the quinone-type-structure in the bicyclic nucleus of aristolochene with the C8-oxo group and the C-3 hydroxyl group, and the P450 monooxygenase ORF6 that introduces the epoxide at the double bond between carbons 1 and 2. No monoxy or dioxy-intermediates have been reported to be released to the broth, so these three early oxidative reactions may be coupled together. Eremofortin B is further oxidized by another P450 monooxygenase, that introduces a second epoxide between carbons 7 and 11 prior to acetylation to eremofortin A by the acetyltransferase ORF8. The second epoxidation may be performed by a second P450 monooxygenase. After the acetylation step, eremofortin A is converted to eremofortin C and then to PR-toxin. First the conversion of eremofortin A to eremofortin C proceeds by oxidation of the side chain of the molecule at C-12 and is catalyzed by the short-chain oxidoreductase prx1. The cytochrome P450 monooxygenase ORF6 is probably also involved in this step. The primary alcohol formed at C-12 is finally oxidized by the short-chain alcohol dehydrogenase prx4 that forms PR-toxin. In Penicillium roqueforti (strain FM164), this protein is Eremophilane O-acetyltransferase ORF8.